Consider the following 162-residue polypeptide: Phenazine biosynthesis protein PhzB 2 (162 aa).

Thr-91 bears the Phosphothreonine mark.

Belongs to the PhzA/PhzB family.

Functionally, involved in the biosynthesis of the antibiotic phenazine, a nitrogen-containing heterocyclic molecule having important roles in virulence, competition and biological control. The protein is Phenazine biosynthesis protein PhzB 2 (phzB2) of Pseudomonas aeruginosa (strain UCBPP-PA14).